The primary structure comprises 54 residues: Large ribosomal subunit protein bL33 (54 aa).

This sequence belongs to the bacterial ribosomal protein bL33 family.

This Chloroflexus aggregans (strain MD-66 / DSM 9485) protein is Large ribosomal subunit protein bL33.